Here is a 545-residue protein sequence, read N- to C-terminus: CTP synthase (545 aa).

Positions 1 to 266 (MTKNYIFITG…DDYICNYFKL (266 aa)) are amidoligase domain. Position 14 (S14) interacts with CTP. S14 is a binding site for UTP. ATP is bound by residues 15 to 20 (SLGKGI) and D72. Mg(2+)-binding residues include D72 and E140. Residues 147-149 (DIE), 187-192 (KTKPTQ), and K223 contribute to the CTP site. Residues 187–192 (KTKPTQ) and K223 each bind UTP. 239-241 (KDV) is a binding site for ATP. Residues 291 to 543 (VIGIIGKYIK…IKSAGKHKKN (253 aa)) form the Glutamine amidotransferase type-1 domain. G352 contacts L-glutamine. C379 (nucleophile; for glutamine hydrolysis) is an active-site residue. L-glutamine-binding positions include 380–383 (LGMQ), E403, and R471. Residues H516 and E518 contribute to the active site.

This sequence belongs to the CTP synthase family. As to quaternary structure, homotetramer.

It carries out the reaction UTP + L-glutamine + ATP + H2O = CTP + L-glutamate + ADP + phosphate + 2 H(+). The enzyme catalyses L-glutamine + H2O = L-glutamate + NH4(+). It catalyses the reaction UTP + NH4(+) + ATP = CTP + ADP + phosphate + 2 H(+). It participates in pyrimidine metabolism; CTP biosynthesis via de novo pathway; CTP from UDP: step 2/2. Its activity is regulated as follows. Allosterically activated by GTP, when glutamine is the substrate; GTP has no effect on the reaction when ammonia is the substrate. The allosteric effector GTP functions by stabilizing the protein conformation that binds the tetrahedral intermediate(s) formed during glutamine hydrolysis. Inhibited by the product CTP, via allosteric rather than competitive inhibition. In terms of biological role, catalyzes the ATP-dependent amination of UTP to CTP with either L-glutamine or ammonia as the source of nitrogen. Regulates intracellular CTP levels through interactions with the four ribonucleotide triphosphates. This chain is CTP synthase, found in Buchnera aphidicola subsp. Acyrthosiphon pisum (strain Tuc7).